A 95-amino-acid polypeptide reads, in one-letter code: Sec-independent protein translocase protein TatA (95 aa).

A helical membrane pass occupies residues 1-21 (MGSMSVWHWVIVAVVVMLLFG). The tract at residues 42-95 (GMADDETQPNTATSVPPVGPNDPVRTLPHQGAPGTAPQPPHVQPHVPAGDHKAV) is disordered.

This sequence belongs to the TatA/E family. As to quaternary structure, the Tat system comprises two distinct complexes: a TatABC complex, containing multiple copies of TatA, TatB and TatC subunits, and a separate TatA complex, containing only TatA subunits. Substrates initially bind to the TatABC complex, which probably triggers association of the separate TatA complex to form the active translocon.

It localises to the cell inner membrane. Functionally, part of the twin-arginine translocation (Tat) system that transports large folded proteins containing a characteristic twin-arginine motif in their signal peptide across membranes. TatA could form the protein-conducting channel of the Tat system. The sequence is that of Sec-independent protein translocase protein TatA from Methylorubrum extorquens (strain PA1) (Methylobacterium extorquens).